A 497-amino-acid chain; its full sequence is ATP synthase subunit alpha, chloroplastic (497 aa).

170 to 177 (GDRQTGKT) lines the ATP pocket.

Belongs to the ATPase alpha/beta chains family. F-type ATPases have 2 components, CF(1) - the catalytic core - and CF(0) - the membrane proton channel. CF(1) has five subunits: alpha(3), beta(3), gamma(1), delta(1), epsilon(1). CF(0) has four main subunits: a, b, b' and c.

The protein localises to the plastid. Its subcellular location is the chloroplast thylakoid membrane. The catalysed reaction is ATP + H2O + 4 H(+)(in) = ADP + phosphate + 5 H(+)(out). Its function is as follows. Produces ATP from ADP in the presence of a proton gradient across the membrane. The alpha chain is a regulatory subunit. This Bigelowiella natans (Pedinomonas minutissima) protein is ATP synthase subunit alpha, chloroplastic.